Consider the following 213-residue polypeptide: tRNA (guanine-N(7)-)-methyltransferase (213 aa).

Asp-40, Glu-65, Asn-92, and Asp-118 together coordinate S-adenosyl-L-methionine. Residue Asp-118 is part of the active site. 2 residues coordinate substrate: Lys-122 and Asp-154.

It belongs to the class I-like SAM-binding methyltransferase superfamily. TrmB family.

It catalyses the reaction guanosine(46) in tRNA + S-adenosyl-L-methionine = N(7)-methylguanosine(46) in tRNA + S-adenosyl-L-homocysteine. The protein operates within tRNA modification; N(7)-methylguanine-tRNA biosynthesis. In terms of biological role, catalyzes the formation of N(7)-methylguanine at position 46 (m7G46) in tRNA. In Synechococcus elongatus (strain ATCC 33912 / PCC 7942 / FACHB-805) (Anacystis nidulans R2), this protein is tRNA (guanine-N(7)-)-methyltransferase.